Reading from the N-terminus, the 197-residue chain is MAVLLPLFLLSFMFTYSNAAVCVCKDANELDLQKVIDFACGGGADCAQIQTTGACYQPNTLKNHCDVAVNSYYQKKASTGATCDFNGAAVISTSPPSTTSSCLSSSSSNGTPTAGYPSTGNSTTASPGTTNPSTGNSTNSTLPTNDKPTSSTITFPDSTTMGPSSSTSGDPNGGEELSVRTTTIILLTTIAAVALRV.

An N-terminal signal peptide occupies residues 1-19; it reads MAVLLPLFLLSFMFTYSNA. A compositionally biased stretch (low complexity) spans 101–113; it reads SCLSSSSSNGTPT. The tract at residues 101–176 is disordered; it reads SCLSSSSSNG…TSGDPNGGEE (76 aa). Residues 116–125 are compositionally biased toward polar residues; sequence YPSTGNSTTA. A compositionally biased stretch (low complexity) spans 126 to 145; it reads SPGTTNPSTGNSTNSTLPTN. A compositionally biased stretch (polar residues) spans 146 to 155; that stretch reads DKPTSSTITF. The span at 156–170 shows a compositional bias: low complexity; that stretch reads PDSTTMGPSSSTSGD. Asparagine 172 carries GPI-anchor amidated asparagine lipidation. Positions 173 to 197 are cleaved as a propeptide — removed in mature form; it reads GGEELSVRTTTIILLTTIAAVALRV.

As to expression, expressed in the sieve elements.

It is found in the cell membrane. This chain is Carbohydrate-binding X8 domain-containing protein, found in Arabidopsis thaliana (Mouse-ear cress).